Reading from the N-terminus, the 322-residue chain is MSGERAKRFPLALEDLKREPRKPEGRVAERQAAGDAARQRLTAAAAAPAAASPIVPERRAPHGGVFAAKPARAKQHAPAAPGAAKRAPQGGAKQGDRSAAPNVALSGALALTSERVRERMVERLRANGVADPRVLAAMSAVPRHMFVDPGLAAQAYEDAALPIGHQQTISKPSVVARMIELAAAGRALERVLEIGTGCGYQAAVLSRVARDVYSIERVKPLYERAKLNLRPLRVPNIRLHYGDGRVGLPAAAPFDAIVIAAAGLDVPRALLEQLAIGGRLVAPVGEQAGEQVLTLVERVAPAQWRESRLDRVFFVPLKSGVI.

Residues 1 to 101 form a disordered region; the sequence is MSGERAKRFP…AKQGDRSAAP (101 aa). Residues 14-29 show a composition bias toward basic and acidic residues; that stretch reads EDLKREPRKPEGRVAE. 2 stretches are compositionally biased toward low complexity: residues 33 to 51 and 76 to 91; these read AGDA…PAAA and HAPA…PQGG. Residue serine 170 is part of the active site.

Belongs to the methyltransferase superfamily. L-isoaspartyl/D-aspartyl protein methyltransferase family.

It is found in the cytoplasm. The enzyme catalyses [protein]-L-isoaspartate + S-adenosyl-L-methionine = [protein]-L-isoaspartate alpha-methyl ester + S-adenosyl-L-homocysteine. In terms of biological role, catalyzes the methyl esterification of L-isoaspartyl residues in peptides and proteins that result from spontaneous decomposition of normal L-aspartyl and L-asparaginyl residues. It plays a role in the repair and/or degradation of damaged proteins. This Burkholderia pseudomallei (strain 1710b) protein is Protein-L-isoaspartate O-methyltransferase.